Reading from the N-terminus, the 199-residue chain is Holliday junction branch migration complex subunit RuvA (199 aa).

Positions 1–63 are domain I; that stretch reads MIASVRGEVL…EDSMTLYGFT (63 aa). The interval 64 to 142 is domain II; the sequence is DAETRDLFLT…AAGAAGAPAG (79 aa). The interval 143-153 is flexible linker; sequence AARNGHAVRGP. Residues 153–199 are domain III; it reads PVVEALVGLGFAAKQAEEATDKVLAAEPEAGTSGALRAALSLLGKSR.

This sequence belongs to the RuvA family. In terms of assembly, homotetramer. Forms an RuvA(8)-RuvB(12)-Holliday junction (HJ) complex. HJ DNA is sandwiched between 2 RuvA tetramers; dsDNA enters through RuvA and exits via RuvB. An RuvB hexamer assembles on each DNA strand where it exits the tetramer. Each RuvB hexamer is contacted by two RuvA subunits (via domain III) on 2 adjacent RuvB subunits; this complex drives branch migration. In the full resolvosome a probable DNA-RuvA(4)-RuvB(12)-RuvC(2) complex forms which resolves the HJ.

The protein resides in the cytoplasm. The RuvA-RuvB-RuvC complex processes Holliday junction (HJ) DNA during genetic recombination and DNA repair, while the RuvA-RuvB complex plays an important role in the rescue of blocked DNA replication forks via replication fork reversal (RFR). RuvA specifically binds to HJ cruciform DNA, conferring on it an open structure. The RuvB hexamer acts as an ATP-dependent pump, pulling dsDNA into and through the RuvAB complex. HJ branch migration allows RuvC to scan DNA until it finds its consensus sequence, where it cleaves and resolves the cruciform DNA. The chain is Holliday junction branch migration complex subunit RuvA from Mycobacterium avium (strain 104).